We begin with the raw amino-acid sequence, 36 residues long: Mu/kappa-theraphotoxin-Ap1a (36 aa).

Disulfide bonds link Cys3–Cys18, Cys10–Cys23, and Cys17–Cys30. Phenylalanine amide is present on Phe36.

This sequence belongs to the neurotoxin 10 (Hwtx-1) family. Expressed by the venom gland.

It is found in the secreted. Functionally, inhibitor of voltage-gated potassium and sodium channels. Among other potassium channels, it selectively inhibits Kv10.1/KCNH1/EAG1 (IC(50)=236 nM) by shifting the voltage dependence of channel activation in a depolarising direction, it shows a maximum inhibition of 80% at saturating concentrations, it shows fast on-rates, and is poorly reversible. It also slightly affects channel inactivation, when the membrane is highly depolarised (&gt;+80 mV). It shows similar potency on Nav1.7/SCN9A (IC(50)=222 nM) and lower potency on Nav1.2/SCN2A (IC(50)=519 nM). In Avicularia purpurea (Ecuadorian purple pinktoe tarantula), this protein is Mu/kappa-theraphotoxin-Ap1a.